The chain runs to 62 residues: Photosystem II reaction center protein Z (62 aa).

Transmembrane regions (helical) follow at residues A8–A28 and F41–I61.

The protein belongs to the PsbZ family. In terms of assembly, PSII is composed of 1 copy each of membrane proteins PsbA, PsbB, PsbC, PsbD, PsbE, PsbF, PsbH, PsbI, PsbJ, PsbK, PsbL, PsbM, PsbT, PsbY, PsbZ, Psb30/Ycf12, at least 3 peripheral proteins of the oxygen-evolving complex and a large number of cofactors. It forms dimeric complexes.

It is found in the plastid. The protein localises to the chloroplast thylakoid membrane. Its function is as follows. May control the interaction of photosystem II (PSII) cores with the light-harvesting antenna, regulates electron flow through the 2 photosystem reaction centers. PSII is a light-driven water plastoquinone oxidoreductase, using light energy to abstract electrons from H(2)O, generating a proton gradient subsequently used for ATP formation. The protein is Photosystem II reaction center protein Z of Citrus sinensis (Sweet orange).